The sequence spans 919 residues: TRPM8 channel-associated factor 2 (919 aa).

The region spanning aspartate 542–glycine 841 is the Peptidase M60 domain.

Belongs to the TCAF family. As to quaternary structure, isoform 2 interacts with TRPM8 (via N-terminus and C-terminus domains); the interaction inhibits TRPM8 channel activity. Interacts with TRPV6. Isoform 2 is expressed in the prostate and in cancerous prostate samples.

It localises to the cell membrane. Its function is as follows. Negatively regulates the plasma membrane cation channel TRPM8 activity. Involved in the recruitment of TRPM8 to the cell surface. Promotes prostate cancer cell migration stimulation in a TRPM8-dependent manner. The polypeptide is TRPM8 channel-associated factor 2 (Homo sapiens (Human)).